The chain runs to 275 residues: Large ribosomal subunit protein uL2 (275 aa).

The segment at 216–275 (GIRPQTRGSAMNPIDHPHGGGEGKTNSGRHPVTPWGMPTKGYKTRKKKASDKLIISKRKK) is disordered. Positions 257–275 (YKTRKKKASDKLIISKRKK) are enriched in basic residues.

Belongs to the universal ribosomal protein uL2 family. Part of the 50S ribosomal subunit. Forms a bridge to the 30S subunit in the 70S ribosome.

Its function is as follows. One of the primary rRNA binding proteins. Required for association of the 30S and 50S subunits to form the 70S ribosome, for tRNA binding and peptide bond formation. It has been suggested to have peptidyltransferase activity; this is somewhat controversial. Makes several contacts with the 16S rRNA in the 70S ribosome. The polypeptide is Large ribosomal subunit protein uL2 (Aliarcobacter butzleri (strain RM4018) (Arcobacter butzleri)).